Reading from the N-terminus, the 118-residue chain is MSNILAVFNPPPQRELEKEETMDCVPCQVMSTMFSVGFGSYLASGKPFKYGKKEAKRGISLTEFEKRNPQWWKVTLRSFGGLLIAFGFVRGTEGWLWHKNKEYKNYKKLSNDGETQAN.

It to S.pombe tam6.

It localises to the mitochondrion. This is an uncharacterized protein from Saccharomyces cerevisiae (strain ATCC 204508 / S288c) (Baker's yeast).